The primary structure comprises 183 residues: Phosphinothricin N-acetyltransferase (183 aa).

The N-acetyltransferase domain occupies 8-173 (ADIRRATEAD…WQLDFSLPVP (166 aa)). Acetyl-CoA-binding positions include 91–93 (VYV), 99–104 (RTGLGS), and N130.

This sequence belongs to the acetyltransferase family. PAT/BAR subfamily.

The enzyme catalyses phosphinothricin + acetyl-CoA = N-acetylphosphinothricin + CoA + H(+). Its function is as follows. Inactivates phosphinothricin (PPT) by transfer of an acetyl group from acetyl CoA. Can also acetylate demethylphosphinothricin but not PTT or glutamate. This enzyme is an effector of phosphinothricin tripeptide (PTT or bialaphos) resistance. In Streptomyces hygroscopicus, this protein is Phosphinothricin N-acetyltransferase.